The following is a 243-amino-acid chain: UPF0502 protein RALTA_B0914 (243 aa).

A compositionally biased stretch (polar residues) spans 1–10 (MPSTPESDPT). Residues 1-23 (MPSTPESDPTQPGDRPARPALRP) are disordered.

This sequence belongs to the UPF0502 family.

This Cupriavidus taiwanensis (strain DSM 17343 / BCRC 17206 / CCUG 44338 / CIP 107171 / LMG 19424 / R1) (Ralstonia taiwanensis (strain LMG 19424)) protein is UPF0502 protein RALTA_B0914.